The chain runs to 152 residues: Large ribosomal subunit protein uL15 (152 aa).

The interval 1–66 is disordered; sequence MRSNPMTLRL…GFEGGQTPMQ (66 aa). The span at 28-38 shows a compositional bias: gly residues; that stretch reads RGIGSGLGKTA. Residues 39–52 show a composition bias toward basic residues; the sequence is GRGHKGSFARKGGG.

It belongs to the universal ribosomal protein uL15 family. In terms of assembly, part of the 50S ribosomal subunit.

Functionally, binds to the 23S rRNA. This is Large ribosomal subunit protein uL15 from Xanthomonas oryzae pv. oryzae (strain KACC10331 / KXO85).